We begin with the raw amino-acid sequence, 312 residues long: Pyrimidine-specific ribonucleoside hydrolase RihA (312 aa).

H240 is an active-site residue.

This sequence belongs to the IUNH family. RihA subfamily.

Its function is as follows. Hydrolyzes cytidine or uridine to ribose and cytosine or uracil, respectively. In Shewanella woodyi (strain ATCC 51908 / MS32), this protein is Pyrimidine-specific ribonucleoside hydrolase RihA.